Reading from the N-terminus, the 124-residue chain is UPF0102 protein Noc_0355 (124 aa).

It belongs to the UPF0102 family.

This chain is UPF0102 protein Noc_0355, found in Nitrosococcus oceani (strain ATCC 19707 / BCRC 17464 / JCM 30415 / NCIMB 11848 / C-107).